The following is a 376-amino-acid chain: N-acetyldiaminopimelate deacetylase (376 aa).

D69 is an active-site residue. Catalysis depends on E128, which acts as the Proton acceptor.

Belongs to the peptidase M20A family. N-acetyldiaminopimelate deacetylase subfamily.

It catalyses the reaction N-acetyl-(2S,6S)-2,6-diaminopimelate + H2O = (2S,6S)-2,6-diaminopimelate + acetate. Its pathway is amino-acid biosynthesis; L-lysine biosynthesis via DAP pathway; LL-2,6-diaminopimelate from (S)-tetrahydrodipicolinate (acetylase route): step 3/3. Functionally, catalyzes the conversion of N-acetyl-diaminopimelate to diaminopimelate and acetate. The polypeptide is N-acetyldiaminopimelate deacetylase (Streptococcus pneumoniae (strain CGSP14)).